The following is a 450-amino-acid chain: UPF0236 protein in vanSb 3'region (450 aa).

This sequence belongs to the UPF0236 family.

The protein is UPF0236 protein in vanSb 3'region of Streptococcus gallolyticus (Streptococcus bovis biotype I).